The primary structure comprises 266 residues: DNA-directed RNA polymerase subunit Rpo3 (266 aa).

[3Fe-4S] cluster-binding residues include C205, C208, and C211.

The protein belongs to the archaeal Rpo3/eukaryotic RPB3 RNA polymerase subunit family. In terms of assembly, part of the RNA polymerase complex. [3Fe-4S] cluster is required as a cofactor.

The protein resides in the cytoplasm. It carries out the reaction RNA(n) + a ribonucleoside 5'-triphosphate = RNA(n+1) + diphosphate. In terms of biological role, DNA-dependent RNA polymerase (RNAP) catalyzes the transcription of DNA into RNA using the four ribonucleoside triphosphates as substrates. The polypeptide is DNA-directed RNA polymerase subunit Rpo3 (Methanosarcina acetivorans (strain ATCC 35395 / DSM 2834 / JCM 12185 / C2A)).